The chain runs to 670 residues: Tripeptidyl-peptidase SED1 (670 aa).

The N-terminal stretch at 1–20 (MSTMIFMYFIYIVLYASGIA) is a signal peptide. Positions 21-231 (ANLSYHVHEK…VGLLKNKILS (211 aa)) are cleaved as a propeptide — removed in mature form. One can recognise a Peptidase S53 domain in the interval 241 to 669 (LITPDCLRAL…DRMLDLFLQL (429 aa)). Residues glutamate 318 and aspartate 322 each act as charge relay system in the active site. Residues asparagine 334, asparagine 387, asparagine 488, asparagine 508, and asparagine 551 are each glycosylated (N-linked (GlcNAc...) asparagine). Serine 586 (charge relay system) is an active-site residue. Positions 627, 628, 647, and 649 each coordinate Ca(2+).

Ca(2+) is required as a cofactor.

The protein resides in the secreted. The protein localises to the extracellular space. The enzyme catalyses Release of an N-terminal tripeptide from a polypeptide.. In terms of biological role, secreted tripeptidyl-peptidase which degrades proteins at acidic pHs and is involved in virulence. The protein is Tripeptidyl-peptidase SED1 (SED1) of Arthroderma otae (strain ATCC MYA-4605 / CBS 113480) (Microsporum canis).